Reading from the N-terminus, the 199-residue chain is uncharacterized protein (199 aa).

A disordered region spans residues 1-41; the sequence is MKFKRDENQNSTHHRGNKNNTNNDDDDKEEEEEIINDTTMP. Acidic residues predominate over residues 23–35; that stretch reads NDDDDKEEEEEII. Helical transmembrane passes span 73–93, 96–116, and 166–186; these read LILDLVGFFTQIIPIFGFAFW, ISTYLIFKVYGSGLHLCVSFL, and IAIAVALIAIYKIISYFSPYL.

The protein localises to the membrane. This is an uncharacterized protein from Dictyostelium discoideum (Social amoeba).